Reading from the N-terminus, the 227-residue chain is MDSKWSRRTGSLLLLLVSNLLLCKSTASLPICPSGAVNCQVSLRDLFDRAVILSHHIHKLSSEMFNEFDKRYTQGRGFITKAINSCHTSSLSTPEDKEQAQQIHHEDLLNMVLRVLPSWNDPLYHLVTEVRGMQEAPDAILSKAIEIEEQNRRLLEGMEKIVGQVHPGIKENEIYSVWSGLPSLQMADEDARLFAFYNLLHCLRRDSHKIDNYLKLLKCRIIYDSNC.

The first 28 residues, 1-28 (MDSKWSRRTGSLLLLLVSNLLLCKSTAS), serve as a signal peptide directing secretion. An intrachain disulfide couples cysteine 32 to cysteine 39. 3 positions are modified to phosphoserine: serine 54, serine 62, and serine 118. Cystine bridges form between cysteine 86/cysteine 202 and cysteine 219/cysteine 227.

Belongs to the somatotropin/prolactin family. In terms of assembly, interacts with PRLR.

Its subcellular location is the secreted. Functionally, prolactin acts primarily on the mammary gland by promoting lactation. In Oryctolagus cuniculus (Rabbit), this protein is Prolactin (PRL).